The sequence spans 277 residues: 4-hydroxy-3-methylbut-2-enyl diphosphate reductase (277 aa).

Residue C12 participates in [4Fe-4S] cluster binding. H36 and H70 together coordinate (2E)-4-hydroxy-3-methylbut-2-enyl diphosphate. The dimethylallyl diphosphate site is built by H36 and H70. Isopentenyl diphosphate-binding residues include H36 and H70. C92 provides a ligand contact to [4Fe-4S] cluster. Residue H120 coordinates (2E)-4-hydroxy-3-methylbut-2-enyl diphosphate. H120 lines the dimethylallyl diphosphate pocket. H120 contacts isopentenyl diphosphate. E122 functions as the Proton donor in the catalytic mechanism. (2E)-4-hydroxy-3-methylbut-2-enyl diphosphate is bound at residue T158. C186 lines the [4Fe-4S] cluster pocket. Positions 214, 216, and 258 each coordinate (2E)-4-hydroxy-3-methylbut-2-enyl diphosphate. Residues S214, N216, and S258 each coordinate dimethylallyl diphosphate. Positions 214, 216, and 258 each coordinate isopentenyl diphosphate.

This sequence belongs to the IspH family. [4Fe-4S] cluster is required as a cofactor.

The catalysed reaction is isopentenyl diphosphate + 2 oxidized [2Fe-2S]-[ferredoxin] + H2O = (2E)-4-hydroxy-3-methylbut-2-enyl diphosphate + 2 reduced [2Fe-2S]-[ferredoxin] + 2 H(+). It catalyses the reaction dimethylallyl diphosphate + 2 oxidized [2Fe-2S]-[ferredoxin] + H2O = (2E)-4-hydroxy-3-methylbut-2-enyl diphosphate + 2 reduced [2Fe-2S]-[ferredoxin] + 2 H(+). The protein operates within isoprenoid biosynthesis; dimethylallyl diphosphate biosynthesis; dimethylallyl diphosphate from (2E)-4-hydroxy-3-methylbutenyl diphosphate: step 1/1. It functions in the pathway isoprenoid biosynthesis; isopentenyl diphosphate biosynthesis via DXP pathway; isopentenyl diphosphate from 1-deoxy-D-xylulose 5-phosphate: step 6/6. In terms of biological role, catalyzes the conversion of 1-hydroxy-2-methyl-2-(E)-butenyl 4-diphosphate (HMBPP) into a mixture of isopentenyl diphosphate (IPP) and dimethylallyl diphosphate (DMAPP). Acts in the terminal step of the DOXP/MEP pathway for isoprenoid precursor biosynthesis. This is 4-hydroxy-3-methylbut-2-enyl diphosphate reductase from Campylobacter jejuni subsp. doylei (strain ATCC BAA-1458 / RM4099 / 269.97).